Here is a 63-residue protein sequence, read N- to C-terminus: Beta-defensin 5 (63 aa).

An N-terminal signal peptide occupies residues 1–22 (MRIHYLLFSFLLVLLSPLSVFT). The residue at position 23 (glutamine 23) is a Pyrrolidone carboxylic acid. 3 disulfides stabilise this stretch: cysteine 31/cysteine 59, cysteine 38/cysteine 52, and cysteine 42/cysteine 60.

This sequence belongs to the beta-defensin family.

It localises to the secreted. Functionally, has antibacterial activity. The protein is Beta-defensin 5 (Defb5) of Rattus norvegicus (Rat).